Here is a 207-residue protein sequence, read N- to C-terminus: Large ribosomal subunit protein bL25 (207 aa).

This sequence belongs to the bacterial ribosomal protein bL25 family. CTC subfamily. Part of the 50S ribosomal subunit; part of the 5S rRNA/L5/L18/L25 subcomplex. Contacts the 5S rRNA. Binds to the 5S rRNA independently of L5 and L18.

This is one of the proteins that binds to the 5S RNA in the ribosome where it forms part of the central protuberance. This chain is Large ribosomal subunit protein bL25, found in Brucella abortus (strain S19).